An 877-amino-acid chain; its full sequence is DNA (cytosine-5)-methyltransferase 3A (877 aa).

3 disordered regions span residues 1–154, 194–250, and 412–431; these read MVES…MQRH, EETP…PEYE, and AYAP…EKPK. 2 stretches are compositionally biased toward basic and acidic residues: residues 107–133 and 195–206; these read KLLE…EGSR and ETPRAEPQKEEE. The segment covering 210–225 has biased composition (polar residues); it reads PASQQPTDPASPNVAT. One can recognise a PWWP domain in the interval 226-284; it reads TPEPVVADAVDKNTSKSADDEPEYEDGRGLGIGELVWGKLRGFSWWPGRIVSWWMTGRS. The segment covering 234–244 has biased composition (basic and acidic residues); that stretch reads AVDKNTSKSAD. The 133-residue stretch at 447–579 folds into the ADD domain; that stretch reads EVRQKCRNIE…LQMFFANNHD (133 aa). The GATA-type; atypical zinc-finger motif lies at 458 to 488; it reads ICISCGSLNVTLEHPLFIGGMCQNCKNCFLE. A PHD-type; atypical zinc finger spans residues 499–555; it reads QSYCTICCGGREVLMCGNNNCCRCFCVECVDLLVGPGAAQAAIKEDPWNCYMCGHKG. Positions 599–877 constitute an SAM-dependent MTase C5-type domain; that stretch reads IRVLSLFDGI…APLKEYFACV (279 aa). S-adenosyl-L-methionine is bound by residues 606–610, Glu629, and 651–653; these read DGIAT and DVR. Cys675 is an active-site residue. Residue 856 to 858 coordinates S-adenosyl-L-methionine; sequence RSW.

This sequence belongs to the class I-like SAM-binding methyltransferase superfamily. C5-methyltransferase family.

Its subcellular location is the nucleus. The protein resides in the chromosome. It is found in the cytoplasm. It carries out the reaction a 2'-deoxycytidine in DNA + S-adenosyl-L-methionine = a 5-methyl-2'-deoxycytidine in DNA + S-adenosyl-L-homocysteine + H(+). The catalysed reaction is L-cysteinyl-[protein] + S-adenosyl-L-methionine = S-methyl-L-cysteinyl-[protein] + S-adenosyl-L-homocysteine + H(+). Required for genome-wide de novo methylation and is essential for development. DNA methylation is coordinated with methylation of histones. It modifies DNA in a non-processive manner and also methylates non-CpG sites. Acts as a transcriptional corepressor for ZNF238. Can actively repress transcription through the recruitment of HDAC activity. Also has weak auto-methylation activity on some Cys residue in absence of DNA. The protein is DNA (cytosine-5)-methyltransferase 3A (DNMT3A) of Gallus gallus (Chicken).